The chain runs to 144 residues: Large ribosomal subunit protein uL15 (144 aa).

The interval 1–52 is disordered; sequence MRLNTISSAPGAKQAEKRVGRGIGSGWGKTCGRGHKGQKSRSGGFHKVGFEG. Residues 21–31 show a composition bias toward gly residues; the sequence is RGIGSGWGKTC.

Belongs to the universal ribosomal protein uL15 family. In terms of assembly, part of the 50S ribosomal subunit.

Functionally, binds to the 23S rRNA. The sequence is that of Large ribosomal subunit protein uL15 from Nitrosococcus oceani (strain ATCC 19707 / BCRC 17464 / JCM 30415 / NCIMB 11848 / C-107).